The primary structure comprises 231 residues: Large ribosomal subunit protein uL1 (231 aa).

This sequence belongs to the universal ribosomal protein uL1 family. Part of the 50S ribosomal subunit.

Functionally, binds directly to 23S rRNA. The L1 stalk is quite mobile in the ribosome, and is involved in E site tRNA release. Protein L1 is also a translational repressor protein, it controls the translation of the L11 operon by binding to its mRNA. In Kosmotoga olearia (strain ATCC BAA-1733 / DSM 21960 / TBF 19.5.1), this protein is Large ribosomal subunit protein uL1.